The sequence spans 92 residues: Putative protein IntG (92 aa).

This sequence belongs to the 'phage' integrase family.

The sequence is that of Putative protein IntG (intG) from Escherichia coli (strain K12).